The following is a 500-amino-acid chain: uncharacterized protein (500 aa).

A signal peptide spans methionine 1–glycine 20. Asparagine 43 carries an N-linked (GlcNAc...) asparagine glycan. The FAD-binding PCMH-type domain maps to threonine 60–glutamine 232. Histidine 98 carries the pros-8alpha-FAD histidine modification. N-linked (GlcNAc...) asparagine glycans are attached at residues asparagine 194, asparagine 201, asparagine 246, asparagine 299, and asparagine 414.

It belongs to the oxygen-dependent FAD-linked oxidoreductase family. FAD is required as a cofactor.

Its subcellular location is the secreted. This is an uncharacterized protein from Arthroderma benhamiae (strain ATCC MYA-4681 / CBS 112371) (Trichophyton mentagrophytes).